Consider the following 116-residue polypeptide: Putative iron-sulfur cluster insertion protein ErpA (116 aa).

Iron-sulfur cluster is bound by residues cysteine 44, cysteine 108, and cysteine 110.

Belongs to the HesB/IscA family. In terms of assembly, homodimer. Iron-sulfur cluster is required as a cofactor.

Its function is as follows. Required for insertion of 4Fe-4S clusters. In Herminiimonas arsenicoxydans, this protein is Putative iron-sulfur cluster insertion protein ErpA.